We begin with the raw amino-acid sequence, 829 residues long: Leucine--tRNA ligase (829 aa).

Positions 40–51 (PYPSGAGLHVGH) match the 'HIGH' region motif. The 'KMSKS' region motif lies at 609–613 (KMSKS). Lysine 612 is a binding site for ATP.

Belongs to the class-I aminoacyl-tRNA synthetase family.

The protein resides in the cytoplasm. It catalyses the reaction tRNA(Leu) + L-leucine + ATP = L-leucyl-tRNA(Leu) + AMP + diphosphate. In Lactococcus lactis subsp. lactis (strain IL1403) (Streptococcus lactis), this protein is Leucine--tRNA ligase.